A 553-amino-acid polypeptide reads, in one-letter code: ATP synthase F(1) complex subunit alpha, mitochondrial (553 aa).

Residues 1–43 (MLSVRVAAAVVRALPRRAGLVSRNALGSSFIAARNFHASNTHL) constitute a mitochondrion transit peptide. Ser53 and Ser65 each carry phosphoserine. At Ser76 the chain carries Phosphoserine; alternate. O-linked (GlcNAc) serine; alternate glycosylation occurs at Ser76. Ser106 is subject to Phosphoserine. Lys123, Lys126, and Lys132 each carry N6-acetyllysine. Residue Thr134 is modified to Phosphothreonine. At Lys161 the chain carries N6-acetyllysine; alternate. Lys161 is subject to N6-succinyllysine; alternate. Phosphoserine is present on Ser166. Residue Lys167 is modified to N6-acetyllysine; alternate. N6-succinyllysine; alternate is present on Lys167. Ser184 bears the Phosphoserine mark. Arg204 is modified (omega-N-methylarginine). ATP is bound by residues Gln215, Gly217, Lys218, Thr219, and Ser220. Thr219 provides a ligand contact to Mg(2+). N6-acetyllysine; alternate is present on residues Lys230 and Lys239. Lys230 and Lys239 each carry N6-succinyllysine; alternate. The residue at position 240 (Lys240) is an N6-acetyllysine. 2 positions are modified to N6-acetyllysine; alternate: Lys261 and Lys305. Residues Lys261 and Lys305 each carry the N6-succinyllysine; alternate modification. Residue Asp312 coordinates Mg(2+). Lys427 carries the post-translational modification N6-acetyllysine; alternate. N6-succinyllysine; alternate is present on Lys427. At Lys434 the chain carries N6-acetyllysine. Gln473 and Gln475 together coordinate ATP. Lys498, Lys506, Lys531, and Lys539 each carry N6-acetyllysine; alternate. N6-succinyllysine; alternate occurs at positions 498, 506, 531, and 539. N6-acetyllysine is present on Lys541.

Belongs to the ATPase alpha/beta chains family. In terms of assembly, homotrimer. Component of the ATP synthase complex composed at least of ATP5F1A/subunit alpha, ATP5F1B/subunit beta, ATP5MC1/subunit c (homooctomer), MT-ATP6/subunit a, MT-ATP8/subunit 8, ATP5ME/subunit e, ATP5MF/subunit f, ATP5MG/subunit g, ATP5MK/subunit k, ATP5MJ/subunit j, ATP5F1C/subunit gamma, ATP5F1D/subunit delta, ATP5F1E/subunit epsilon, ATP5PF/subunit F6, ATP5PB/subunit b, ATP5PD/subunit d, ATP5PO/subunit OSCP. ATP synthase complex consists of a soluble F(1) head domain (subunits alpha(3) and beta(3)) - the catalytic core - and a membrane F(0) domain - the membrane proton channel (subunits c, a, 8, e, f, g, k and j). These two domains are linked by a central stalk (subunits gamma, delta, and epsilon) rotating inside the F1 region and a stationary peripheral stalk (subunits F6, b, d, and OSCP). Interacts with ATPAF2. Interacts with HRG; the interaction occurs on the surface of T-cells and alters the cell morphology when associated with concanavalin (in vitro). Interacts with PLG (angiostatin peptide); the interaction inhibits most of the angiogenic properties of angiostatin. Interacts with BLOC1S1. Interacts with BCL2L1 isoform BCL-X(L); the interaction mediates the association of BCL2L1 isoform BCL-X(L) with the mitochondrial membrane F(1)F(0) ATP synthase and enhances neurons metabolic efficiency. Interacts with CLN5 and PPT1. Interacts with S100A1; this interaction increases F1-ATPase activity. Interacts with ABCB7; this interaction allows the regulation of cellular iron homeostasis and cellular reactive oxygen species (ROS) levels in cardiomyocytes. Acetylated on lysine residues. BLOC1S1 is required for acetylation.

The protein resides in the mitochondrion inner membrane. The protein localises to the cell membrane. Subunit alpha, of the mitochondrial membrane ATP synthase complex (F(1)F(0) ATP synthase or Complex V) that produces ATP from ADP in the presence of a proton gradient across the membrane which is generated by electron transport complexes of the respiratory chain. ATP synthase complex consist of a soluble F(1) head domain - the catalytic core - and a membrane F(1) domain - the membrane proton channel. These two domains are linked by a central stalk rotating inside the F(1) region and a stationary peripheral stalk. During catalysis, ATP synthesis in the catalytic domain of F(1) is coupled via a rotary mechanism of the central stalk subunits to proton translocation. In vivo, can only synthesize ATP although its ATP hydrolase activity can be activated artificially in vitro. With the catalytic subunit beta (ATP5F1B), forms the catalytic core in the F(1) domain. Subunit alpha does not bear the catalytic high-affinity ATP-binding sites. This chain is ATP synthase F(1) complex subunit alpha, mitochondrial, found in Pan troglodytes (Chimpanzee).